Reading from the N-terminus, the 236-residue chain is UPF0502 protein Bcenmc03_4618 (236 aa).

It belongs to the UPF0502 family.

This chain is UPF0502 protein Bcenmc03_4618, found in Burkholderia orbicola (strain MC0-3).